The following is a 133-amino-acid chain: Small ribosomal subunit protein uS8 (133 aa).

It belongs to the universal ribosomal protein uS8 family. Part of the 30S ribosomal subunit. Contacts proteins S5 and S12.

Its function is as follows. One of the primary rRNA binding proteins, it binds directly to 16S rRNA central domain where it helps coordinate assembly of the platform of the 30S subunit. This Prochlorococcus marinus (strain MIT 9313) protein is Small ribosomal subunit protein uS8.